An 84-amino-acid chain; its full sequence is MTDQIRTLQGRVVSDKMEKSMVVAIERVVKHPIYGKFIRRTTKLHVHDENNECGIGDVVEIRECRPLSKTKSWTLVRVVEKAIL.

It belongs to the universal ribosomal protein uS17 family. In terms of assembly, part of the 30S ribosomal subunit.

In terms of biological role, one of the primary rRNA binding proteins, it binds specifically to the 5'-end of 16S ribosomal RNA. In Yersinia enterocolitica serotype O:8 / biotype 1B (strain NCTC 13174 / 8081), this protein is Small ribosomal subunit protein uS17.